The sequence spans 98 residues: Large ribosomal subunit protein uL23 (98 aa).

It belongs to the universal ribosomal protein uL23 family. Part of the 50S ribosomal subunit. Contacts protein L29, and trigger factor when it is bound to the ribosome.

Functionally, one of the early assembly proteins it binds 23S rRNA. One of the proteins that surrounds the polypeptide exit tunnel on the outside of the ribosome. Forms the main docking site for trigger factor binding to the ribosome. The sequence is that of Large ribosomal subunit protein uL23 from Frankia casuarinae (strain DSM 45818 / CECT 9043 / HFP020203 / CcI3).